We begin with the raw amino-acid sequence, 200 residues long: Claudin-11 (200 aa).

Met1 is a topological domain (cytoplasmic). Residues 2-22 traverse the membrane as a helical segment; that stretch reads VATCLQVVGFVTSFVGWIGVI. The Extracellular segment spans residues 23 to 75; sequence VTTSTNDWVVTCGYTIPTCRKLDELGSKGLWADCVMATGLYHCKPLVDILPCR. Residues 76-96 traverse the membrane as a helical segment; the sequence is ALMIAASVLGLPAILLLLTVL. Topologically, residues 97–115 are cytoplasmic; it reads PCIRMGQEPGVAKYRRAQL. The helical transmembrane segment at 116-136 threads the bilayer; sequence AGVLLILLALCAIVATIWFPV. The Extracellular portion of the chain corresponds to 137-150; the sequence is CAHRETTIVSFGYS. Residues 151–171 form a helical membrane-spanning segment; the sequence is LYAGWIGAVLCLVGGCVILCC. Residues 172 to 200 are Cytoplasmic-facing; it reads AGDAQAFGENRFYYTAGSSSPTHAKSAHV. Phosphoserine is present on residues Ser190 and Ser191.

Belongs to the claudin family. As to quaternary structure, interacts with tetraspanin-3/TSPAN3. Interacts with OCLN.

Its subcellular location is the cell junction. It localises to the tight junction. The protein localises to the cell membrane. Its function is as follows. Plays a major role in tight junction-specific obliteration of the intercellular space, through calcium-independent cell-adhesion activity. The chain is Claudin-11 (CLDN11) from Pongo abelii (Sumatran orangutan).